Consider the following 615-residue polypeptide: Increased rDNA silencing protein 4 (615 aa).

Disordered stretches follow at residues 38–135, 152–260, 277–304, and 323–445; these read SNEV…SSHS, LLGI…NRSQ, PSIASSNTTTTTSNQGSGLPNLVPNYSS, and KPKH…NEDK. A compositionally biased stretch (polar residues) spans 50–65; that stretch reads VSRNPQTRLSEPSLQK. Composition is skewed to low complexity over residues 121–135 and 157–168; these read HSQSKLSSDNNSSHS and SRSSSRNGSNES. Serine 180 carries the phosphoserine modification. Residues 184 to 198 show a composition bias toward low complexity; that stretch reads LLTSFSSGRRLSSSS. The span at 248 to 260 shows a compositional bias: polar residues; it reads NPDTSDVISNRSQ. The segment covering 281 to 290 has biased composition (low complexity); sequence SSNTTTTTSN. The segment covering 365–377 has biased composition (basic and acidic residues); sequence ENDHASSLHEGNL. Over residues 389–402 the composition is skewed to acidic residues; that stretch reads DVYDDTDSDSESDQ. Residues 409-438 are compositionally biased toward basic residues; that stretch reads KPRKRDRIKRKIRNSANKTAHHRPIHRTRD. The EH domain maps to 460–571; the sequence is ERKRYESMWV…QCVWDSVDRY (112 aa).

Belongs to the IRS4 family. Interacts with INP51.

Its function is as follows. With TAX4, acts as a positive regulator of INP51 activity and phosphatidylinositol 4,5-bisphosphate turnover. Negatively regulates signaling through the cell integrity pathway, including the MAP kinase SLT2. Also seems to be involved in rDNA silencing. In Saccharomyces cerevisiae (strain ATCC 204508 / S288c) (Baker's yeast), this protein is Increased rDNA silencing protein 4 (IRS4).